The chain runs to 513 residues: Probable mannosyl-oligosaccharide alpha-1,2-mannosidase 1B (513 aa).

A signal peptide spans 1–21 (MHLSSLSLSLTALAIVSPSAA). Residues Asn97, Asn117, Asn184, Asn251, Asn322, Asn348, and Asn368 are each glycosylated (N-linked (GlcNAc...) asparagine). A disulfide bridge connects residues Cys334 and Cys363. The active-site Proton donor is Glu377. Residue Thr503 participates in Ca(2+) binding.

It belongs to the glycosyl hydrolase 47 family. In terms of assembly, monomer. Ca(2+) serves as cofactor. It depends on Mg(2+) as a cofactor.

It localises to the cytoplasmic vesicle lumen. The enzyme catalyses N(4)-(alpha-D-Man-(1-&gt;2)-alpha-D-Man-(1-&gt;2)-alpha-D-Man-(1-&gt;3)-[alpha-D-Man-(1-&gt;2)-alpha-D-Man-(1-&gt;3)-[alpha-D-Man-(1-&gt;2)-alpha-D-Man-(1-&gt;6)]-alpha-D-Man-(1-&gt;6)]-beta-D-Man-(1-&gt;4)-beta-D-GlcNAc-(1-&gt;4)-beta-D-GlcNAc)-L-asparaginyl-[protein] (N-glucan mannose isomer 9A1,2,3B1,2,3) + 4 H2O = N(4)-(alpha-D-Man-(1-&gt;3)-[alpha-D-Man-(1-&gt;3)-[alpha-D-Man-(1-&gt;6)]-alpha-D-Man-(1-&gt;6)]-beta-D-Man-(1-&gt;4)-beta-D-GlcNAc-(1-&gt;4)-beta-D-GlcNAc)-L-asparaginyl-[protein] (N-glucan mannose isomer 5A1,2) + 4 beta-D-mannose. It catalyses the reaction N(4)-(alpha-D-Man-(1-&gt;2)-alpha-D-Man-(1-&gt;2)-alpha-D-Man-(1-&gt;3)-[alpha-D-Man-(1-&gt;3)-[alpha-D-Man-(1-&gt;2)-alpha-D-Man-(1-&gt;6)]-alpha-D-Man-(1-&gt;6)]-beta-D-Man-(1-&gt;4)-beta-D-GlcNAc-(1-&gt;4)-beta-D-GlcNAc)-L-asparaginyl-[protein] (N-glucan mannose isomer 8A1,2,3B1,3) + 3 H2O = N(4)-(alpha-D-Man-(1-&gt;3)-[alpha-D-Man-(1-&gt;3)-[alpha-D-Man-(1-&gt;6)]-alpha-D-Man-(1-&gt;6)]-beta-D-Man-(1-&gt;4)-beta-D-GlcNAc-(1-&gt;4)-beta-D-GlcNAc)-L-asparaginyl-[protein] (N-glucan mannose isomer 5A1,2) + 3 beta-D-mannose. It functions in the pathway protein modification; protein glycosylation. In terms of biological role, involved in the maturation of Asn-linked oligosaccharides. Progressively trims alpha-1,2-linked mannose residues from Man(9)GlcNAc(2) to produce Man(5)GlcNAc(2). The chain is Probable mannosyl-oligosaccharide alpha-1,2-mannosidase 1B (mns1B) from Aspergillus niger (strain ATCC MYA-4892 / CBS 513.88 / FGSC A1513).